The following is a 245-amino-acid chain: tRNA (guanine-N(7)-)-methyltransferase (245 aa).

S-adenosyl-L-methionine is bound by residues Gly-70, 93 to 94 (EI), 126 to 127 (NA), and Leu-146. Residue Asp-149 is part of the active site. Residue 224-226 (SEE) participates in S-adenosyl-L-methionine binding.

The protein belongs to the class I-like SAM-binding methyltransferase superfamily. TrmB family.

It localises to the nucleus. It carries out the reaction guanosine(46) in tRNA + S-adenosyl-L-methionine = N(7)-methylguanosine(46) in tRNA + S-adenosyl-L-homocysteine. It participates in tRNA modification; N(7)-methylguanine-tRNA biosynthesis. Its function is as follows. Catalyzes the formation of N(7)-methylguanine at position 46 (m7G46) in tRNA. In Aedes aegypti (Yellowfever mosquito), this protein is tRNA (guanine-N(7)-)-methyltransferase.